Reading from the N-terminus, the 388-residue chain is F-box/LRR-repeat protein At3g59190 (388 aa).

One can recognise an F-box domain in the interval 11-64; it reads KDIISNLPDALLCHVLSFLPTTEAASTSVLAKRWRFLLAFVPNLDLDNMIYDRP. LRR repeat units lie at residues 151-177, 180-205, 228-252, 313-345, and 346-371; these read KVSG…HLSA, FGDE…VMIK, CENI…EFTD, TMYL…TVET, and DERV…IFEV.

The chain is F-box/LRR-repeat protein At3g59190 from Arabidopsis thaliana (Mouse-ear cress).